The chain runs to 159 residues: uncharacterized protein (159 aa).

Disordered regions lie at residues 1–23 (MEQDWQPGEEVTPGPEPCSKGQA) and 91–110 (AGGGRREQSQKPCSNGGPAA).

This is an uncharacterized protein from Homo sapiens (Human).